Consider the following 304-residue polypeptide: Probable WRKY transcription factor 13 (304 aa).

Residues 141-190 (QKNNHGSEIDVDDNDDEVGDGGGINDDDNGRHHHHDTPSRHDKHNTASLG) are disordered. The segment covering 149 to 159 (IDVDDNDDEVG) has biased composition (acidic residues). The segment at residues 217-282 (SEVDVLDDGY…YEGRHLHSPS (66 aa)) is a DNA-binding region (WRKY).

This sequence belongs to the WRKY group II-c family.

It localises to the nucleus. Functionally, transcription factor. Interacts specifically with the W box (5'-(T)TGAC[CT]-3'), a frequently occurring elicitor-responsive cis-acting element. The polypeptide is Probable WRKY transcription factor 13 (WRKY13) (Arabidopsis thaliana (Mouse-ear cress)).